We begin with the raw amino-acid sequence, 359 residues long: tRNA N6-adenosine threonylcarbamoyltransferase (359 aa).

His121 and His125 together coordinate Fe cation. Substrate-binding positions include 143 to 147 (LVSGG), Asp176, Gly189, and Asn286. A Fe cation-binding site is contributed by Asp311.

The protein belongs to the KAE1 / TsaD family. Fe(2+) serves as cofactor.

The protein localises to the cytoplasm. The enzyme catalyses L-threonylcarbamoyladenylate + adenosine(37) in tRNA = N(6)-L-threonylcarbamoyladenosine(37) in tRNA + AMP + H(+). In terms of biological role, required for the formation of a threonylcarbamoyl group on adenosine at position 37 (t(6)A37) in tRNAs that read codons beginning with adenine. Is involved in the transfer of the threonylcarbamoyl moiety of threonylcarbamoyl-AMP (TC-AMP) to the N6 group of A37, together with TsaE and TsaB. TsaD likely plays a direct catalytic role in this reaction. This is tRNA N6-adenosine threonylcarbamoyltransferase from Jannaschia sp. (strain CCS1).